Reading from the N-terminus, the 494-residue chain is Cobyric acid synthase (494 aa).

In terms of domain architecture, GATase cobBQ-type spans 249–443 (EINVTILRLP…LHGIFDNGAW (195 aa)). Cys-330 serves as the catalytic Nucleophile. His-435 is a catalytic residue.

It belongs to the CobB/CobQ family. CobQ subfamily.

The protein operates within cofactor biosynthesis; adenosylcobalamin biosynthesis. Functionally, catalyzes amidations at positions B, D, E, and G on adenosylcobyrinic A,C-diamide. NH(2) groups are provided by glutamine, and one molecule of ATP is hydrogenolyzed for each amidation. The sequence is that of Cobyric acid synthase from Crocosphaera subtropica (strain ATCC 51142 / BH68) (Cyanothece sp. (strain ATCC 51142)).